The primary structure comprises 400 residues: Phosphoglycerate kinase (400 aa).

Substrate contacts are provided by residues 24–26, R40, 63–66, R121, and R154; these read DFN and HFGR. ATP is bound by residues K205, G296, E327, and 356 to 359; that span reads GGDS.

In terms of assembly, monomer.

The protein localises to the cytoplasm. The enzyme catalyses (2R)-3-phosphoglycerate + ATP = (2R)-3-phospho-glyceroyl phosphate + ADP. The protein operates within carbohydrate degradation; glycolysis; pyruvate from D-glyceraldehyde 3-phosphate: step 2/5. The protein is Phosphoglycerate kinase of Nostoc sp. (strain PCC 7120 / SAG 25.82 / UTEX 2576).